Here is a 389-residue protein sequence, read N- to C-terminus: Mannitol-1-phosphate 5-dehydrogenase (389 aa).

7–18 (AVHFGGGNIGRG) contributes to the NAD(+) binding site. K216 is an active-site residue.

This sequence belongs to the mannitol dehydrogenase family. In terms of assembly, monomer.

The enzyme catalyses D-mannitol 1-phosphate + NAD(+) = beta-D-fructose 6-phosphate + NADH + H(+). In terms of biological role, catalyzes the NAD(H)-dependent interconversion of D-fructose 6-phosphate and D-mannitol 1-phosphate in the mannitol metabolic pathway. The protein is Mannitol-1-phosphate 5-dehydrogenase of Pyrenophora tritici-repentis (strain Pt-1C-BFP) (Wheat tan spot fungus).